The chain runs to 350 residues: Salicylate decarboxylase (350 aa).

Belongs to the metallo-dependent hydrolases superfamily. In terms of assembly, homotetramer.

It catalyses the reaction salicylate + H(+) = phenol + CO2. With respect to regulation, inhibited by AgNO(3), HgCl(2), p-chloromercuribenzoic acid and NiCl(2). Its function is as follows. Reversibly catalyzes the regioselective carboxylation of phenol to form salicylic acid. Involved in a pathway for the degradation of salicylate via phenol. Also catalyzes the decarboxylation of beta-resorcylic acid (2,4-dihydroxybenzoic acid) into resorcinol (1,3-dihydroxybenzene), gamma-resorcylic acid (2,6-dihydroxybenzoic acid) into resorcinol, 2,3-dihydroxybenzoic acid into catechol (1,2-dihydroxybenzene), and 4-aminosalicylic acid into 3-aminophenol. The chain is Salicylate decarboxylase from Cutaneotrichosporon moniliiforme (Yeast).